Reading from the N-terminus, the 1311-residue chain is Zinc finger protein 423 (1311 aa).

The segment covering 1 to 11 (MSRRKQAKPRS) has biased composition (basic residues). 3 disordered regions span residues 1–21 (MSRR…EASD), 34–70 (GGLE…EDVE), and 95–123 (AHRC…VASP). The span at 41 to 54 (ECDRKSSRALEDRN) shows a compositional bias: basic and acidic residues. 2 positions are modified to phosphoserine: Ser55 and Ser58. Residues 75 to 101 (YTCDHCQQDFESLADLTDHRAHRCPGD) form a C2H2-type 1; degenerate zinc finger. Residues 110–123 (WVASSPSSKDVASP) are compositionally biased toward polar residues. 7 C2H2-type zinc fingers span residues 146-168 (YPCQ…EQIH), 174-196 (FKCT…IKLH), 202-224 (YHCH…LKTH), 230-252 (FKCS…MQAH), 271-294 (FMCD…LTLH), 303-326 (LQCI…HQAH), and 331-353 (HKCP…LDSH). The tract at residues 354 to 426 (RQPDSSNHSV…PLRGQKKMRD (73 aa)) is disordered. Positions 373–382 (ASMSSATPDS) are enriched in polar residues. Low complexity predominate over residues 390–404 (SVASMSSATPDSSAS). The C2H2-type 9; degenerate zinc-finger motif lies at 436 to 460 (YSCPYCSKRDFTSLAVLEIHLKTIH). 3 consecutive C2H2-type zinc fingers follow at residues 468–491 (HTCQ…RKLH), 507–530 (FHCN…RVSH), and 544–567 (FFCN…QQAH). The segment at 590–615 (YSCPYCTNSPIFGSILKLTKHIKENH) adopts a C2H2-type 13; atypical zinc-finger fold. Residues 617 to 654 (NIPLAHSKKSKAEQSPVSSDVEVSSPKRQRLSGSANSI) form a disordered region. Ser631 bears the Phosphoserine mark. The span at 631–642 (SPVSSDVEVSSP) shows a compositional bias: low complexity. C2H2-type zinc fingers lie at residues 659-681 (YPCN…LKLH), 689-711 (QACP…LTVH), 719-742 (YVCE…LDMH), 747-770 (YHCT…AVKH), 777-800 (YRCT…KHSH), 808-830 (HKCI…ITTH), and 834-857 (YNCR…REKH). The segment at 913–935 (YGCDICGAAYTMEVLLQNHRLRD) adopts a C2H2-type 21; degenerate zinc-finger fold. 3 consecutive C2H2-type zinc fingers follow at residues 957-979 (HKCN…LQTH), 986-1008 (YMCP…KVTH), and 1047-1069 (FRCV…GTFH). Ser1081 carries the post-translational modification Phosphoserine. Residues 1091–1109 (YKCALCLKEFRSKQDLVRL) form a C2H2-type 25; degenerate zinc finger. 5 C2H2-type zinc fingers span residues 1147–1170 (LRCP…QVDH), 1195–1217 (YQCI…VANH), 1225–1247 (HECK…LIEH), 1256–1279 (FKCP…FAVH), and 1286–1309 (YDCS…MSQH). Over residues 1163–1174 (ESHMQVDHRDLT) the composition is skewed to basic and acidic residues. The disordered stretch occupies residues 1163–1190 (ESHMQVDHRDLTPETSGPRKGAQTSPVP).

It belongs to the krueppel C2H2-type zinc-finger protein family. Homodimer. Interacts with PARP1, SMAD1 and SMAD4. Interacts with EBF1. Interacts with CEP290. Expressed in brain, eye, olfactory epithelium, spleen and heart. Expressed in the basal layer, consisting of neural precursor cells and immature sensory neurons of the olfactory epithelium, but not in the mature receptor cells.

The protein localises to the nucleus. In terms of biological role, transcription factor that can both act as an activator or a repressor depending on the context. Plays a central role in BMP signaling and olfactory neurogenesis. Associates with SMADs in response to BMP2 leading to activate transcription of BMP target genes. Acts as a transcriptional repressor via its interaction with EBF1, a transcription factor involved in terminal olfactory receptor neurons differentiation; this interaction preventing EBF1 to bind DNA and activate olfactory-specific genes. Involved in olfactory neurogenesis by participating in a developmental switch that regulates the transition from differentiation to maturation in olfactory receptor neurons. Controls proliferation and differentiation of neural precursors in cerebellar vermis formation. This Rattus norvegicus (Rat) protein is Zinc finger protein 423 (Znf423).